The chain runs to 704 residues: Polyribonucleotide nucleotidyltransferase (704 aa).

Positions 487 and 493 each coordinate Mg(2+). One can recognise a KH domain in the interval 554-613 (PRLLTIKIHPDKIREVIGKGGSTIQAITKETGTQIDIQDDGTIIIASVNAIAAQAAKSRI). The 69-residue stretch at 623 to 691 (GRIYEGKVAK…KQGRIRLSIK (69 aa)) folds into the S1 motif domain.

The protein belongs to the polyribonucleotide nucleotidyltransferase family. As to quaternary structure, component of the RNA degradosome, which is a multiprotein complex involved in RNA processing and mRNA degradation. Mg(2+) is required as a cofactor.

The protein localises to the cytoplasm. It catalyses the reaction RNA(n+1) + phosphate = RNA(n) + a ribonucleoside 5'-diphosphate. In terms of biological role, involved in mRNA degradation. Catalyzes the phosphorolysis of single-stranded polyribonucleotides processively in the 3'- to 5'-direction. The sequence is that of Polyribonucleotide nucleotidyltransferase from Xanthomonas campestris pv. campestris (strain B100).